The chain runs to 356 residues: Glutamine synthetase PR-2 (356 aa).

The GS beta-grasp domain maps to 19–99 (IIAEYIWVGG…VICDVYTPAG (81 aa)). Residues 37–66 (ARTLPGPVDDPAKLPKWNYDGSSTDQAPGD) are disordered. Residues 106-356 (KRYDAAKIFS…IAETTILWKP (251 aa)) enclose the GS catalytic domain.

The protein belongs to the glutamine synthetase family. Homooctamer. In terms of tissue distribution, roots.

The protein localises to the cytoplasm. The enzyme catalyses L-glutamate + NH4(+) + ATP = L-glutamine + ADP + phosphate + H(+). This Phaseolus vulgaris (Kidney bean) protein is Glutamine synthetase PR-2.